Here is a 382-residue protein sequence, read N- to C-terminus: Lycopene beta-cyclase (382 aa).

6 to 36 (DLILVGAGLANGLIALRLQQQQPDMRILLID) is an NAD(+) binding site.

The protein belongs to the lycopene cyclase family. It depends on FAD as a cofactor.

It is found in the cell inner membrane. The catalysed reaction is a carotenoid psi-end group = a carotenoid beta-end derivative. It catalyses the reaction all-trans-lycopene = gamma-carotene. It carries out the reaction gamma-carotene = all-trans-beta-carotene. The enzyme catalyses all-trans-neurosporene = beta-zeacarotene. The catalysed reaction is beta-zeacarotene = 7,8-dihydro-beta-carotene. Its pathway is carotenoid biosynthesis; beta-carotene biosynthesis. Its activity is regulated as follows. Activity is increased in the presence of NAD(P)H. NADPH is not involved directly in the cyclization reaction, but must play an indirect role, e.g. as an allosteric activator. Functionally, catalyzes the double cyclization reaction which converts lycopene to beta-carotene. Also catalyzes the double cyclization reaction which converts neurosporene to 7,8-dihydro-beta-carotene via monocyclic beta-zeacarotene. May also convert zeta-carotene to bicyclic 7,8,7',8'-tetrahydro-beta-carotene. In Pantoea ananas (Erwinia uredovora), this protein is Lycopene beta-cyclase.